Consider the following 243-residue polypeptide: 1-(5-phosphoribosyl)-5-[(5-phosphoribosylamino)methylideneamino] imidazole-4-carboxamide isomerase (243 aa).

D8 acts as the Proton acceptor in catalysis. Residue D129 is the Proton donor of the active site.

It belongs to the HisA/HisF family.

The protein localises to the cytoplasm. It catalyses the reaction 1-(5-phospho-beta-D-ribosyl)-5-[(5-phospho-beta-D-ribosylamino)methylideneamino]imidazole-4-carboxamide = 5-[(5-phospho-1-deoxy-D-ribulos-1-ylimino)methylamino]-1-(5-phospho-beta-D-ribosyl)imidazole-4-carboxamide. The protein operates within amino-acid biosynthesis; L-histidine biosynthesis; L-histidine from 5-phospho-alpha-D-ribose 1-diphosphate: step 4/9. In Brucella anthropi (strain ATCC 49188 / DSM 6882 / CCUG 24695 / JCM 21032 / LMG 3331 / NBRC 15819 / NCTC 12168 / Alc 37) (Ochrobactrum anthropi), this protein is 1-(5-phosphoribosyl)-5-[(5-phosphoribosylamino)methylideneamino] imidazole-4-carboxamide isomerase.